Reading from the N-terminus, the 201-residue chain is Large ribosomal subunit protein eL15 (201 aa).

Belongs to the eukaryotic ribosomal protein eL15 family.

In Quercus suber (Cork oak), this protein is Large ribosomal subunit protein eL15 (RPL15).